The chain runs to 774 residues: RNA exonuclease 5 (774 aa).

A compositionally biased stretch (basic and acidic residues) spans 1–19; it reads MEPEREGTERHPRKVRESR. Residues 1–22 are disordered; the sequence is MEPEREGTERHPRKVRESRQAP. Residues 228–376 enclose the Exonuclease domain; it reads LFGLDCEMCL…EDARTILELA (149 aa). RRM domains follow at residues 505-579 and 600-679; these read STVY…RPVT and GSIY…RHLH.

The chain is RNA exonuclease 5 from Homo sapiens (Human).